The chain runs to 163 residues: NADH-quinone oxidoreductase subunit I (163 aa).

4Fe-4S ferredoxin-type domains are found at residues 53 to 83 (LRRYPNGEERCIACKLCEAICPAQAITIEAG) and 94 to 123 (VRYDIDMVKCIYCGFCQEACPVDAIVEGPN). [4Fe-4S] cluster is bound by residues cysteine 63, cysteine 66, cysteine 69, cysteine 73, cysteine 103, cysteine 106, cysteine 109, and cysteine 113.

It belongs to the complex I 23 kDa subunit family. As to quaternary structure, NDH-1 is composed of 14 different subunits. Subunits NuoA, H, J, K, L, M, N constitute the membrane sector of the complex. It depends on [4Fe-4S] cluster as a cofactor.

The protein resides in the cell inner membrane. It catalyses the reaction a quinone + NADH + 5 H(+)(in) = a quinol + NAD(+) + 4 H(+)(out). Functionally, NDH-1 shuttles electrons from NADH, via FMN and iron-sulfur (Fe-S) centers, to quinones in the respiratory chain. The immediate electron acceptor for the enzyme in this species is believed to be ubiquinone. Couples the redox reaction to proton translocation (for every two electrons transferred, four hydrogen ions are translocated across the cytoplasmic membrane), and thus conserves the redox energy in a proton gradient. The protein is NADH-quinone oxidoreductase subunit I of Rhizobium johnstonii (strain DSM 114642 / LMG 32736 / 3841) (Rhizobium leguminosarum bv. viciae).